A 78-amino-acid polypeptide reads, in one-letter code: Large ribosomal subunit protein bL28 (78 aa).

It belongs to the bacterial ribosomal protein bL28 family.

In Leifsonia xyli subsp. xyli (strain CTCB07), this protein is Large ribosomal subunit protein bL28.